The sequence spans 440 residues: C4-dicarboxylate transport protein (440 aa).

The next 9 membrane-spanning stretches (helical) occupy residues 15 to 35 (VLVA…TGVA), 46 to 66 (LIKM…IAGM), 78 to 98 (YALL…LVVV), 146 to 166 (AFAN…GFAL), 190 to 210 (IINM…AFTI), 224 to 244 (LMAC…GGIC), 291 to 311 (VVGL…SIYL), 332 to 352 (ITLL…TGSG), and 354 to 374 (IVLA…LALI). The disordered stretch occupies residues 420-440 (GAPLVDTRPTDDLGVAEGPAR).

Belongs to the dicarboxylate/amino acid:cation symporter (DAACS) (TC 2.A.23) family.

It is found in the cell inner membrane. Responsible for the transport of dicarboxylates such as succinate, fumarate, and malate from the periplasm across the membrane. The polypeptide is C4-dicarboxylate transport protein (Pseudomonas putida (strain ATCC 700007 / DSM 6899 / JCM 31910 / BCRC 17059 / LMG 24140 / F1)).